A 279-amino-acid chain; its full sequence is Thymidylate synthase (279 aa).

A dUMP-binding site is contributed by 141–142; it reads RR. The active-site Nucleophile is the cysteine 161. Residues 181–184, asparagine 192, and 222–224 each bind dUMP; these read RSND and HIY. Aspartate 184 lines the (6R)-5,10-methylene-5,6,7,8-tetrahydrofolate pocket. Alanine 278 is a binding site for (6R)-5,10-methylene-5,6,7,8-tetrahydrofolate.

The protein belongs to the thymidylate synthase family. Bacterial-type ThyA subfamily. In terms of assembly, homodimer.

It is found in the cytoplasm. The catalysed reaction is dUMP + (6R)-5,10-methylene-5,6,7,8-tetrahydrofolate = 7,8-dihydrofolate + dTMP. It participates in pyrimidine metabolism; dTTP biosynthesis. Its function is as follows. Catalyzes the reductive methylation of 2'-deoxyuridine-5'-monophosphate (dUMP) to 2'-deoxythymidine-5'-monophosphate (dTMP) while utilizing 5,10-methylenetetrahydrofolate (mTHF) as the methyl donor and reductant in the reaction, yielding dihydrofolate (DHF) as a by-product. This enzymatic reaction provides an intracellular de novo source of dTMP, an essential precursor for DNA biosynthesis. The chain is Thymidylate synthase from Bacillus licheniformis (strain ATCC 14580 / DSM 13 / JCM 2505 / CCUG 7422 / NBRC 12200 / NCIMB 9375 / NCTC 10341 / NRRL NRS-1264 / Gibson 46).